The primary structure comprises 251 residues: Developmental protein SEPALLATA 1 (251 aa).

The region spanning 3-57 (RGRVELKRIENKINRQVTFAKRRNGLLKKAYELSVLCDAEVALIIFSNRGKLYEF) is the MADS-box domain. Residues 85 to 176 (AKELENSYRE…ALAMKLDDMI (92 aa)) are a coiled coil. The K-box domain maps to 88-178 (LENSYREYLK…AMKLDDMIGV (91 aa)).

As to quaternary structure, heterodimer with AGAMOUS capable of binding to CArG-box sequences. Interacts with AGL16. Interacts with TT16/AGL32. As to expression, expressed mainly in carpels, and weakly in stamens.

Its subcellular location is the nucleus. Its function is as follows. Probable transcription factor. Functions with SEPALLATA2/AGL4 and SEPALLATA3/AGL9 to ensure proper development of petals, stamens and carpels, and to prevent the indeterminate growth of the flower meristem. Forms a heterodimer via the K-box domain with AGAMOUS, that could be involved in genes regulation during floral meristem development. This is Developmental protein SEPALLATA 1 (SEP1) from Arabidopsis thaliana (Mouse-ear cress).